Here is a 465-residue protein sequence, read N- to C-terminus: ATP-dependent protease ATPase subunit HslU (465 aa).

ATP-binding positions include valine 19, 61 to 66, aspartate 277, glutamate 343, and arginine 415; that span reads GVGKTE.

It belongs to the ClpX chaperone family. HslU subfamily. A double ring-shaped homohexamer of HslV is capped on each side by a ring-shaped HslU homohexamer. The assembly of the HslU/HslV complex is dependent on binding of ATP.

The protein resides in the cytoplasm. Its function is as follows. ATPase subunit of a proteasome-like degradation complex; this subunit has chaperone activity. The binding of ATP and its subsequent hydrolysis by HslU are essential for unfolding of protein substrates subsequently hydrolyzed by HslV. HslU recognizes the N-terminal part of its protein substrates and unfolds these before they are guided to HslV for hydrolysis. In Geobacillus sp. (strain WCH70), this protein is ATP-dependent protease ATPase subunit HslU.